We begin with the raw amino-acid sequence, 133 residues long: Minor spike protein H (133 aa).

It belongs to the microviridae H protein family.

The protein localises to the virion. In terms of biological role, probably triggers with protein G the injection of the phage DNA into the host upon conformational changes induced by virus-host receptor interaction. The chain is Minor spike protein H from Spiroplasma virus 4 (SpV4).